The sequence spans 489 residues: Betaine aldehyde dehydrogenase (489 aa).

K(+)-binding residues include T26 and D93. Residue 150-152 (GAW) coordinates NAD(+). K162 serves as the catalytic Charge relay system. 176–179 (KPSE) is a binding site for NAD(+). V180 contributes to the K(+) binding site. Residue 229 to 232 (GVET) coordinates NAD(+). Position 245 (L245) interacts with K(+). E251 serves as the catalytic Proton acceptor. G253, C285, and E386 together coordinate NAD(+). The active-site Nucleophile is C285. C285 is subject to Cysteine sulfenic acid (-SOH). 2 residues coordinate K(+): K456 and G459. E463 serves as the catalytic Charge relay system.

It belongs to the aldehyde dehydrogenase family. As to quaternary structure, dimer of dimers. Requires K(+) as cofactor.

The catalysed reaction is betaine aldehyde + NAD(+) + H2O = glycine betaine + NADH + 2 H(+). Its pathway is amine and polyamine biosynthesis; betaine biosynthesis via choline pathway; betaine from betaine aldehyde: step 1/1. Involved in the biosynthesis of the osmoprotectant glycine betaine. Catalyzes the irreversible oxidation of betaine aldehyde to the corresponding acid. The protein is Betaine aldehyde dehydrogenase of Burkholderia mallei (strain SAVP1).